The sequence spans 271 residues: Orotidine 5'-phosphate decarboxylase (271 aa).

The Proton donor role is filled by K95.

The protein belongs to the OMP decarboxylase family. Type 2 subfamily.

The catalysed reaction is orotidine 5'-phosphate + H(+) = UMP + CO2. It functions in the pathway pyrimidine metabolism; UMP biosynthesis via de novo pathway; UMP from orotate: step 2/2. This Aromatoleum aromaticum (strain DSM 19018 / LMG 30748 / EbN1) (Azoarcus sp. (strain EbN1)) protein is Orotidine 5'-phosphate decarboxylase.